A 230-amino-acid chain; its full sequence is N-(5'-phosphoribosyl)anthranilate isomerase (230 aa).

It belongs to the TrpF family.

The catalysed reaction is N-(5-phospho-beta-D-ribosyl)anthranilate = 1-(2-carboxyphenylamino)-1-deoxy-D-ribulose 5-phosphate. It functions in the pathway amino-acid biosynthesis; L-tryptophan biosynthesis; L-tryptophan from chorismate: step 3/5. This Ralstonia nicotianae (strain ATCC BAA-1114 / GMI1000) (Ralstonia solanacearum) protein is N-(5'-phosphoribosyl)anthranilate isomerase.